Reading from the N-terminus, the 330-residue chain is Ketol-acid reductoisomerase (NADP(+)) (330 aa).

The 181-residue stretch at 1–181 (MKVFYDSDFK…GLSRAGVIQT (181 aa)) folds into the KARI N-terminal Rossmann domain. NADP(+)-binding positions include 24–27 (YGSQ), arginine 47, serine 52, and 82–85 (DELQ). Histidine 107 is an active-site residue. Glycine 133 is an NADP(+) binding site. Positions 182 to 327 (TFKEETETDL…AKLRKMCGLE (146 aa)) constitute a KARI C-terminal knotted domain. Residues aspartate 190, glutamate 194, glutamate 226, and glutamate 230 each coordinate Mg(2+). Serine 251 contributes to the substrate binding site.

This sequence belongs to the ketol-acid reductoisomerase family. Mg(2+) serves as cofactor.

The enzyme catalyses (2R)-2,3-dihydroxy-3-methylbutanoate + NADP(+) = (2S)-2-acetolactate + NADPH + H(+). The catalysed reaction is (2R,3R)-2,3-dihydroxy-3-methylpentanoate + NADP(+) = (S)-2-ethyl-2-hydroxy-3-oxobutanoate + NADPH + H(+). The protein operates within amino-acid biosynthesis; L-isoleucine biosynthesis; L-isoleucine from 2-oxobutanoate: step 2/4. Its pathway is amino-acid biosynthesis; L-valine biosynthesis; L-valine from pyruvate: step 2/4. Involved in the biosynthesis of branched-chain amino acids (BCAA). Catalyzes an alkyl-migration followed by a ketol-acid reduction of (S)-2-acetolactate (S2AL) to yield (R)-2,3-dihydroxy-isovalerate. In the isomerase reaction, S2AL is rearranged via a Mg-dependent methyl migration to produce 3-hydroxy-3-methyl-2-ketobutyrate (HMKB). In the reductase reaction, this 2-ketoacid undergoes a metal-dependent reduction by NADPH to yield (R)-2,3-dihydroxy-isovalerate. The protein is Ketol-acid reductoisomerase (NADP(+)) of Methanococcus maripaludis (strain DSM 14266 / JCM 13030 / NBRC 101832 / S2 / LL).